We begin with the raw amino-acid sequence, 162 residues long: Small ribosomal subunit protein uS9 (162 aa).

Belongs to the universal ribosomal protein uS9 family.

This chain is Small ribosomal subunit protein uS9, found in Parvibaculum lavamentivorans (strain DS-1 / DSM 13023 / NCIMB 13966).